The following is a 258-amino-acid chain: uncharacterized protein (258 aa).

The next 4 membrane-spanning stretches (helical) occupy residues 33–53 (LFVI…VTTN), 59–79 (FDSW…IFVF), 88–108 (LLYL…FSFF), and 140–160 (IIAL…WLIQ). Residues 237–258 (NNKINSELQPPSILNKNSKPIE) form a disordered region. Positions 242 to 258 (SELQPPSILNKNSKPIE) are enriched in polar residues.

The protein resides in the membrane. This is an uncharacterized protein from Dictyostelium discoideum (Social amoeba).